Reading from the N-terminus, the 843-residue chain is Eisosome protein 1 (843 aa).

An N-acetylserine modification is found at Ser2. Phosphoserine is present on Ser2. Positions 13–44 (HNIGKTSGGGSRTSSITSSKKSLKHGSKSLRK) are disordered. The segment covering 33-44 (KSLKHGSKSLRK) has biased composition (basic residues). 2 positions are modified to phosphoserine: Ser88 and Ser130. Residues 120 to 174 (KMGPKVVRNNSITSATSKTSKESQTKRKSKESPGAAASKAYSMTMETTSLSSQTN) form a disordered region. Polar residues-rich tracts occupy residues 127 to 137 (RNNSITSATSK) and 163 to 174 (TMETTSLSSQTN). 4 positions are modified to phosphoserine: Ser182, Ser401, Ser584, and Ser710. The tract at residues 717–843 (DLPTQLEKIE…QDAISNQEKK (127 aa)) is disordered. A Phosphothreonine modification is found at Thr720. The segment covering 752–764 (STAAKEATETSSA) has biased composition (low complexity). Phosphoserine is present on residues Ser763 and Ser775. Basic and acidic residues predominate over residues 781-797 (SGKEDANDCKSAEHSKE). Positions 798-810 (ISVSQKAGNNKSL) are enriched in polar residues. 4 positions are modified to phosphoserine: Ser816, Ser828, Ser829, and Ser838.

Belongs to the EIS1 family.

The protein resides in the cytoplasmic granule. Its subcellular location is the cell membrane. Functionally, required for normal formation of eisosomes, large cytoplasmic protein assemblies that localize to specialized domains on plasma membrane and mark the site of endocytosis. This Saccharomyces cerevisiae (strain Lalvin EC1118 / Prise de mousse) (Baker's yeast) protein is Eisosome protein 1 (EIS1).